The primary structure comprises 156 residues: Transcription elongation factor GreA (156 aa).

Residues 2–78 (AKEIILTQEG…MISKAKLIED (77 aa)) adopt a coiled-coil conformation.

The protein belongs to the GreA/GreB family.

Its function is as follows. Necessary for efficient RNA polymerase transcription elongation past template-encoded arresting sites. The arresting sites in DNA have the property of trapping a certain fraction of elongating RNA polymerases that pass through, resulting in locked ternary complexes. Cleavage of the nascent transcript by cleavage factors such as GreA or GreB allows the resumption of elongation from the new 3'terminus. GreA releases sequences of 2 to 3 nucleotides. The sequence is that of Transcription elongation factor GreA from Mesoplasma florum (strain ATCC 33453 / NBRC 100688 / NCTC 11704 / L1) (Acholeplasma florum).